The chain runs to 248 residues: Ubiquinone biosynthesis O-methyltransferase (248 aa).

S-adenosyl-L-methionine contacts are provided by R41, G72, D93, and M136.

Belongs to the methyltransferase superfamily. UbiG/COQ3 family.

The catalysed reaction is a 3-demethylubiquinol + S-adenosyl-L-methionine = a ubiquinol + S-adenosyl-L-homocysteine + H(+). It catalyses the reaction a 3-(all-trans-polyprenyl)benzene-1,2-diol + S-adenosyl-L-methionine = a 2-methoxy-6-(all-trans-polyprenyl)phenol + S-adenosyl-L-homocysteine + H(+). It participates in cofactor biosynthesis; ubiquinone biosynthesis. In terms of biological role, O-methyltransferase that catalyzes the 2 O-methylation steps in the ubiquinone biosynthetic pathway. In Sinorhizobium fredii (strain NBRC 101917 / NGR234), this protein is Ubiquinone biosynthesis O-methyltransferase.